A 149-amino-acid polypeptide reads, in one-letter code: Transcriptional repressor NrdR (149 aa).

Residues 3–34 fold into a zinc finger; it reads CPFCGANDTKVIDSRLVADGHQVRRRRQCLAC. Positions 49 to 139 constitute an ATP-cone domain; the sequence is PRVIKTDGNR…VYRSFEDIRE (91 aa).

Belongs to the NrdR family. It depends on Zn(2+) as a cofactor.

Negatively regulates transcription of bacterial ribonucleotide reductase nrd genes and operons by binding to NrdR-boxes. The chain is Transcriptional repressor NrdR from Photobacterium profundum (strain SS9).